The chain runs to 367 residues: UDP-N-acetylglucosamine--N-acetylmuramyl-(pentapeptide) pyrophosphoryl-undecaprenol N-acetylglucosamine transferase (367 aa).

Residues 22–24 (TGG), Asn134, Arg170, Ser198, Ile253, and Gln298 each bind UDP-N-acetyl-alpha-D-glucosamine.

Belongs to the glycosyltransferase 28 family. MurG subfamily.

It is found in the cell inner membrane. The enzyme catalyses di-trans,octa-cis-undecaprenyl diphospho-N-acetyl-alpha-D-muramoyl-L-alanyl-D-glutamyl-meso-2,6-diaminopimeloyl-D-alanyl-D-alanine + UDP-N-acetyl-alpha-D-glucosamine = di-trans,octa-cis-undecaprenyl diphospho-[N-acetyl-alpha-D-glucosaminyl-(1-&gt;4)]-N-acetyl-alpha-D-muramoyl-L-alanyl-D-glutamyl-meso-2,6-diaminopimeloyl-D-alanyl-D-alanine + UDP + H(+). It functions in the pathway cell wall biogenesis; peptidoglycan biosynthesis. In terms of biological role, cell wall formation. Catalyzes the transfer of a GlcNAc subunit on undecaprenyl-pyrophosphoryl-MurNAc-pentapeptide (lipid intermediate I) to form undecaprenyl-pyrophosphoryl-MurNAc-(pentapeptide)GlcNAc (lipid intermediate II). This is UDP-N-acetylglucosamine--N-acetylmuramyl-(pentapeptide) pyrophosphoryl-undecaprenol N-acetylglucosamine transferase from Xylella fastidiosa (strain M23).